We begin with the raw amino-acid sequence, 360 residues long: Thioredoxin domain-containing protein 15 (360 aa).

The first 32 residues, 1–32, serve as a signal peptide directing secretion; it reads MVPAAGRRPPRVMRLLGWWQVLLWVLGLPVRG. Residues 33 to 321 lie on the Extracellular side of the membrane; it reads VEVAEESGRL…GPLPSTLIKS (289 aa). Residues 141–173 are disordered; the sequence is PDREEEYYTEPEVAESDAAPTEDSNNTESLKSP. The span at 143-155 shows a compositional bias: acidic residues; it reads REEEYYTEPEVAE. A Thioredoxin domain is found at 153 to 296; sequence VAESDAAPTE…LKIFIFNQTG (144 aa). N-linked (GlcNAc...) asparagine glycans are attached at residues asparagine 187, asparagine 194, asparagine 206, and asparagine 293. The chain crosses the membrane as a helical span at residues 322 to 342; it reads VDWLLVFSLFFLISFIMYATI. The Cytoplasmic segment spans residues 343-360; it reads RTESIRWLIPGQEQEHVE.

The protein localises to the cell projection. It localises to the cilium membrane. In terms of biological role, acts as a positive regulator of ciliary hedgehog signaling. Involved in ciliogenesis. This chain is Thioredoxin domain-containing protein 15 (TXNDC15), found in Homo sapiens (Human).